We begin with the raw amino-acid sequence, 216 residues long: ATP-dependent Clp protease proteolytic subunit 3 (216 aa).

The Nucleophile role is filled by serine 120. The active site involves histidine 145.

Belongs to the peptidase S14 family. As to quaternary structure, fourteen ClpP subunits assemble into 2 heptameric rings which stack back to back to give a disk-like structure with a central cavity, resembling the structure of eukaryotic proteasomes.

Its subcellular location is the cytoplasm. The catalysed reaction is Hydrolysis of proteins to small peptides in the presence of ATP and magnesium. alpha-casein is the usual test substrate. In the absence of ATP, only oligopeptides shorter than five residues are hydrolyzed (such as succinyl-Leu-Tyr-|-NHMec, and Leu-Tyr-Leu-|-Tyr-Trp, in which cleavage of the -Tyr-|-Leu- and -Tyr-|-Trp bonds also occurs).. Its function is as follows. Cleaves peptides in various proteins in a process that requires ATP hydrolysis. Has a chymotrypsin-like activity. Plays a major role in the degradation of misfolded proteins. This Prochlorococcus marinus (strain SARG / CCMP1375 / SS120) protein is ATP-dependent Clp protease proteolytic subunit 3.